The following is a 203-amino-acid chain: Type III effector protein HopBF1 (203 aa).

The interval 1–23 is disordered; sequence MFNVSNNVAPSRYQGPSSTSVTP. ATP contacts are provided by serine 40, glutamine 41, lysine 42, aspartate 107, isoleucine 109, and aspartate 114. Aspartate 155 is an active-site residue. Glutamine 157 is a binding site for ATP.

The protein belongs to the HopBF1 family.

The protein resides in the secreted. It is found in the host cell. It carries out the reaction L-seryl-[protein] + ATP = O-phospho-L-seryl-[protein] + ADP + H(+). Its function is as follows. Effector protein that targets and inactivates the eukaryotic molecular chaperone HSP90 during infection. HopBF1 is recognized by HSP90 as a host client. As a result, HopBF1 phosphorylates HSP90, leading to the inactivation of the HSP90 ATPase activity and chaperone function. In vitro, can phosphorylate the recombinant yeast HSP82 (HSP90) and human HSP 90-beta on Ser-108. The sequence is that of Type III effector protein HopBF1 from Ewingella americana (strain ATCC 33852 / DSM 4580 / CCUG 14506 / JCM 5911 / LMG 7869 / NCTC 12157 / CDC 1468-78).